The primary structure comprises 298 residues: Ethanolamine ammonia-lyase small subunit (298 aa).

A disordered region spans residues 15–43; it reads ASMGQDVPQPVAPSTQEGAKPQRAAPTAT. Adenosylcob(III)alamin is bound by residues V210, E231, and C261.

Belongs to the EutC family. As to quaternary structure, the basic unit is a heterodimer which dimerizes to form tetramers. The heterotetramers trimerize; 6 large subunits form a core ring with 6 small subunits projecting outwards. The cofactor is adenosylcob(III)alamin.

The protein localises to the bacterial microcompartment. The enzyme catalyses ethanolamine = acetaldehyde + NH4(+). It participates in amine and polyamine degradation; ethanolamine degradation. Functionally, catalyzes the deamination of various vicinal amino-alcohols to oxo compounds. Allows this organism to utilize ethanolamine as the sole source of nitrogen and carbon in the presence of external vitamin B12. This chain is Ethanolamine ammonia-lyase small subunit, found in Salmonella arizonae (strain ATCC BAA-731 / CDC346-86 / RSK2980).